The following is a 515-amino-acid chain: Putative ribose/galactose/methyl galactoside import ATP-binding protein (515 aa).

ABC transporter domains are found at residues 26–262 and 272–511; these read LEVA…VGRE and VALG…KIMD. 58 to 65 provides a ligand contact to ATP; it reads GENGAGKS.

Belongs to the ABC transporter superfamily. Carbohydrate importer 2 (CUT2) (TC 3.A.1.2) family.

It is found in the cell inner membrane. The enzyme catalyses D-ribose(out) + ATP + H2O = D-ribose(in) + ADP + phosphate + H(+). It carries out the reaction D-galactose(out) + ATP + H2O = D-galactose(in) + ADP + phosphate + H(+). Functionally, part of an ABC transporter complex involved in carbohydrate import. Could be involved in ribose, galactose and/or methyl galactoside import. Responsible for energy coupling to the transport system. This Hahella chejuensis (strain KCTC 2396) protein is Putative ribose/galactose/methyl galactoside import ATP-binding protein.